Consider the following 230-residue polypeptide: MTEIKFCGMTRLSDALVAAENGANALGFIFYPRSPRYLPPEKARELIRRLPPEVIRVGVFVNEAVEKVKEIYHICGLDLVQLHGDENPDYCRRFPAPMLIRAVSPRNGADLAVLDRYSCRAFLLDRREGALYGGTGGISNWELGRRIRERFPLILAGGLNPENVMTAIENVLPHAVDINSGVESAPGIKDPEKIRAVLAAVRRYQGIRETEEERKEPERFRIFERTDEKI.

It belongs to the TrpF family.

It carries out the reaction N-(5-phospho-beta-D-ribosyl)anthranilate = 1-(2-carboxyphenylamino)-1-deoxy-D-ribulose 5-phosphate. Its pathway is amino-acid biosynthesis; L-tryptophan biosynthesis; L-tryptophan from chorismate: step 3/5. This Syntrophus aciditrophicus (strain SB) protein is N-(5'-phosphoribosyl)anthranilate isomerase.